We begin with the raw amino-acid sequence, 127 residues long: Large ribosomal subunit protein bL12 (127 aa).

Residues Val-94–Lys-114 are disordered. A compositionally biased stretch (basic and acidic residues) spans Ala-104 to Lys-114.

It belongs to the bacterial ribosomal protein bL12 family. Homodimer. Part of the ribosomal stalk of the 50S ribosomal subunit. Forms a multimeric L10(L12)X complex, where L10 forms an elongated spine to which 2 to 4 L12 dimers bind in a sequential fashion. Binds GTP-bound translation factors.

In terms of biological role, forms part of the ribosomal stalk which helps the ribosome interact with GTP-bound translation factors. Is thus essential for accurate translation. In Nitratidesulfovibrio vulgaris (strain ATCC 29579 / DSM 644 / CCUG 34227 / NCIMB 8303 / VKM B-1760 / Hildenborough) (Desulfovibrio vulgaris), this protein is Large ribosomal subunit protein bL12.